Reading from the N-terminus, the 352-residue chain is Phenylalanine--tRNA ligase alpha subunit (352 aa).

Residue Glu-258 participates in Mg(2+) binding.

Belongs to the class-II aminoacyl-tRNA synthetase family. Phe-tRNA synthetase alpha subunit type 1 subfamily. In terms of assembly, tetramer of two alpha and two beta subunits. It depends on Mg(2+) as a cofactor.

It localises to the cytoplasm. It catalyses the reaction tRNA(Phe) + L-phenylalanine + ATP = L-phenylalanyl-tRNA(Phe) + AMP + diphosphate + H(+). The polypeptide is Phenylalanine--tRNA ligase alpha subunit (Staphylococcus saprophyticus subsp. saprophyticus (strain ATCC 15305 / DSM 20229 / NCIMB 8711 / NCTC 7292 / S-41)).